The chain runs to 287 residues: 4-diphosphocytidyl-2-C-methyl-D-erythritol kinase (287 aa).

Residue K14 is part of the active site. Residue 98-108 (PPGAGLGGGSS) coordinates ATP. Residue D140 is part of the active site.

It belongs to the GHMP kinase family. IspE subfamily.

The enzyme catalyses 4-CDP-2-C-methyl-D-erythritol + ATP = 4-CDP-2-C-methyl-D-erythritol 2-phosphate + ADP + H(+). Its pathway is isoprenoid biosynthesis; isopentenyl diphosphate biosynthesis via DXP pathway; isopentenyl diphosphate from 1-deoxy-D-xylulose 5-phosphate: step 3/6. Catalyzes the phosphorylation of the position 2 hydroxy group of 4-diphosphocytidyl-2C-methyl-D-erythritol. The protein is 4-diphosphocytidyl-2-C-methyl-D-erythritol kinase of Methylacidiphilum infernorum (isolate V4) (Methylokorus infernorum (strain V4)).